Consider the following 196-residue polypeptide: Peptidoglycan recognition protein (196 aa).

The signal sequence occupies residues 1–23; that stretch reads MARLHSAVVLALALSSLLTEIAA. Cystine bridges form between cysteine 25/cysteine 147 and cysteine 61/cysteine 67. In terms of domain architecture, N-acetylmuramoyl-L-alanine amidase spans 46–173; it reads RPVSLVIVQH…RQLIASESPG (128 aa).

Belongs to the N-acetylmuramoyl-L-alanine amidase 2 family. Monomer. In terms of tissue distribution, constitutively expressed in fat body, epithelial cells and hemocytes. Not detected in Malpighian tubules, silk gland or midgut.

Binds specifically to peptidoglycan and triggers the propenoloxidase cascade which is an important insect defense mechanism. The sequence is that of Peptidoglycan recognition protein from Bombyx mori (Silk moth).